The following is a 622-amino-acid chain: Probable ATP-dependent RNA helicase DDX41 (622 aa).

Residues 1–15 (MEDSEPERKRARADE) are compositionally biased toward basic and acidic residues. 2 disordered regions span residues 1–39 (MEDS…YVPL) and 51–84 (LQRR…PQSN). At Ser-4 the chain carries Phosphoserine. Lys-9 carries the post-translational modification N6-acetyllysine. Lys-9 is covalently cross-linked (Glycyl lysine isopeptide (Lys-Gly) (interchain with G-Cter in ubiquitin)). A phosphoserine mark is found at Ser-21 and Ser-23. Residues 24 to 33 (EDEDEDDEDY) show a composition bias toward acidic residues. Phosphotyrosine is present on Tyr-33. Lys-115 participates in a covalent cross-link: Glycyl lysine isopeptide (Lys-Gly) (interchain with G-Cter in ubiquitin). A Q motif motif is present at residues 181–209 (KSFKEMKFPAAILRGLKKKGILHPTPIQI). In terms of domain architecture, Helicase ATP-binding spans 212–396 (IPTILSGRDM…KSALVKPVTI (185 aa)). 225–232 (AFTGSGKT) contributes to the ATP binding site. The DEAD box signature appears at 344 to 347 (DEAD). Residues 407–567 (DVIQEVEYVK…KVPPVLQVLH (161 aa)) enclose the Helicase C-terminal domain. Tyr-414 is subject to Phosphotyrosine. Residues Lys-416 and Lys-442 each participate in a glycyl lysine isopeptide (Lys-Gly) (interchain with G-Cter in SUMO2) cross-link. The segment at 580–597 (RGCAFCGGLGHRITDCPK) adopts a CCHC-type zinc-finger fold.

It belongs to the DEAD box helicase family. DDX41 subfamily. In terms of assembly, identified in the spliceosome C complex. Interacts with ERCC6. Interacts with FAM50A. Interacts with STING1. Interacts with CGAS. Interacts with several spliceosomes components such as PRP19 or CDC5L. Post-translationally, acetylation at Lys-9 regulates the nuclear/cytoplasmic localization. In terms of processing, phosphorylated by BTK; phosphorylation induces binding to dsDNA and STING1. 'Lys-48'-linked ubiquitinated and degraded by TRIM21 leading to negative regulation of the innate immune response to intracellular dsDNA.

The protein localises to the nucleus. The protein resides in the cytoplasm. It carries out the reaction ATP + H2O = ADP + phosphate + H(+). Functionally, multifunctional protein that participates in many aspects of cellular RNA metabolism. Plays pivotal roles in innate immune sensing and hematopoietic homeostasis. Recognizes foreign or self-nucleic acids generated during microbial infection, thereby initiating anti-pathogen responses. Mechanistically, phosphorylation by BTK allows binding to dsDNA leading to interaction with STING1. Modulates the homeostasis of dsDNA through its ATP-dependent DNA-unwinding activity and ATP-independent strand-annealing activity. In turn, induces STING1-mediated type I interferon and cytokine responses to DNA and DNA viruses. During murine leukemia virus infection, primarily senses the DNA/RNA hybrid generated at the first step of reverse transcription, while cGAS recognizes dsDNA generated at the next step and both are needed for the antiretroviral innate immune response. Selectively modulates the transcription of certain immunity-associated genes by regulating their alternative splicing. Binds to RNA (R)-loops, structures consisting of DNA/RNA hybrids and a displaced strand of DNA that occur during transcription, and prevents their accumulation, thereby maintaining genome stability. Also participates in pre-mRNA splicing, translational regulation and snoRNA processing, which is essential for ribosome biogenesis. This is Probable ATP-dependent RNA helicase DDX41 (Ddx41) from Mus musculus (Mouse).